The primary structure comprises 233 residues: Phosphoglycolate phosphatase 2 (233 aa).

Catalysis depends on D13, which acts as the Nucleophile. Mg(2+) is bound by residues D13 and D15. K152 serves as a coordination point for substrate. 2 residues coordinate Mg(2+): D174 and D178.

It belongs to the archaeal SPP-like hydrolase family. It depends on Mg(2+) as a cofactor.

It catalyses the reaction 2-phosphoglycolate + H2O = glycolate + phosphate. Catalyzes the dephosphorylation of 2-phosphoglycolate. This Saccharolobus solfataricus (strain ATCC 35092 / DSM 1617 / JCM 11322 / P2) (Sulfolobus solfataricus) protein is Phosphoglycolate phosphatase 2.